The sequence spans 307 residues: Geranylgeranyl diphosphate synthase (307 aa).

3 residues coordinate isopentenyl diphosphate: lysine 52, arginine 55, and histidine 86. Mg(2+)-binding residues include aspartate 93 and aspartate 99. Arginine 104 serves as a coordination point for (2E,6E)-farnesyl diphosphate. Arginine 105 contacts isopentenyl diphosphate. (2E,6E)-farnesyl diphosphate contacts are provided by lysine 188, threonine 189, and glutamine 226.

The protein belongs to the FPP/GGPP synthase family. Mg(2+) serves as cofactor.

It catalyses the reaction isopentenyl diphosphate + (2E,6E)-farnesyl diphosphate = (2E,6E,10E)-geranylgeranyl diphosphate + diphosphate. It functions in the pathway isoprenoid biosynthesis; geranylgeranyl diphosphate biosynthesis; geranylgeranyl diphosphate from farnesyl diphosphate and isopentenyl diphosphate: step 1/1. Its function is as follows. Catalyzes the condensation of farnesyl diphosphate (FPP) and isopentenyl diphosphate (IPP) to yield geranylgeranyl diphosphate (GGPP) needed for biosynthesis of carotenoids and diterpenes. In Pseudescherichia vulneris (Escherichia vulneris), this protein is Geranylgeranyl diphosphate synthase (crtE).